The chain runs to 581 residues: Solute carrier family 15 member 3 (581 aa).

Residues 1–14 (MPAPRAREQPRVPG) show a composition bias toward basic and acidic residues. Residues 1-26 (MPAPRAREQPRVPGERQPLLPRGARG) are disordered. The chain crosses the membrane as a helical span at residues 38–58 (VLLVEMLERAAFFGVTANLVL). N-linked (GlcNAc...) asparagine glycosylation is found at asparagine 61 and asparagine 66. The next 3 helical transmembrane spans lie at 76–96 (ALVF…LADV), 103–123 (AVAL…ATAF), and 155–175 (PYCA…ASSV). N-linked (GlcNAc...) asparagine glycosylation occurs at asparagine 178. The chain crosses the membrane as a helical span at residues 200–220 (NWFYWSINLGAVLSLLVVAFI). Asparagine 223 carries an N-linked (GlcNAc...) asparagine glycan. 2 consecutive transmembrane segments (helical) span residues 232–252 (IPVG…PVFI) and 310–330 (FQVL…WMVY). An N-linked (GlcNAc...) asparagine glycan is attached at asparagine 356. Helical transmembrane passes span 369-389 (TIPE…LVPL) and 411-431 (MALG…LEME). The N-linked (GlcNAc...) asparagine glycan is linked to asparagine 439. 3 helical membrane passes run 458–478 (IWWQ…ASIP), 497–517 (GIFF…VALL), and 540–560 (LYFF…VWIA).

It belongs to the major facilitator superfamily. Proton-dependent oligopeptide transporter (POT/PTR) (TC 2.A.17) family.

The protein localises to the lysosome membrane. It localises to the endosome membrane. The catalysed reaction is glycylglycylglycine(out) + n H(+)(out) = glycylglycylglycine(in) + n H(+)(in). It carries out the reaction carnosine(out) + n H(+)(out) = carnosine(in) + n H(+)(in). It catalyses the reaction L-histidine(out) + n H(+)(out) = L-histidine(in) + n H(+)(in). The enzyme catalyses N-acetyl-D-muramoyl-L-alanyl-D-isoglutamine(out) + n H(+)(out) = N-acetyl-D-muramoyl-L-alanyl-D-isoglutamine(in) + n H(+)(in). Proton-coupled amino-acid transporter that transports free histidine and certain di- and tripeptides, and is involved in innate immune response. Also able to transport carnosine. Involved in the detection of microbial pathogens by toll-like receptors (TLRs) and NOD-like receptors (NLRs), probably by mediating transport of bacterial peptidoglycans across the endolysosomal membrane: catalyzes the transport of certain bacterial peptidoglycans, such as muramyl dipeptide (MDP), the NOD2 ligand. The sequence is that of Solute carrier family 15 member 3 from Homo sapiens (Human).